The sequence spans 570 residues: Urease subunit alpha 1 (570 aa).

The 440-residue stretch at 131 to 570 (GGIDTHVHFI…VPMAQRYFLF (440 aa)) folds into the Urease domain. Residues histidine 136, histidine 138, and lysine 219 each coordinate Ni(2+). An N6-carboxylysine modification is found at lysine 219. Position 221 (histidine 221) interacts with substrate. Residues histidine 248 and histidine 274 each coordinate Ni(2+). Histidine 322 functions as the Proton donor in the catalytic mechanism. Aspartate 362 contacts Ni(2+).

This sequence belongs to the metallo-dependent hydrolases superfamily. Urease alpha subunit family. As to quaternary structure, heterotrimer of UreA (gamma), UreB (beta) and UreC (alpha) subunits. Three heterotrimers associate to form the active enzyme. The cofactor is Ni cation. Post-translationally, carboxylation allows a single lysine to coordinate two nickel ions.

It is found in the cytoplasm. It catalyses the reaction urea + 2 H2O + H(+) = hydrogencarbonate + 2 NH4(+). Its pathway is nitrogen metabolism; urea degradation; CO(2) and NH(3) from urea (urease route): step 1/1. This is Urease subunit alpha 1 from Brucella melitensis biotype 1 (strain ATCC 23456 / CCUG 17765 / NCTC 10094 / 16M).